The following is a 218-amino-acid chain: MDKSGSPNASRTSRRRRPRRGSRSASGADAGLRALTQQMLRLNKTLAIGRPTLNHPTFVGSESCKPGYTFTSITLKPPEIEKGSYFGRRLSLPDSVTDYDKKLVSRIQIRINPLPKFDSTVWVTVRKVPSSSDLSVAAISAMFGDGNSPVLVYQYAASGVQANNKLLYDLSEMRADIGDMRKYAVLVYSKDDKLEKDEIVLHVDVEHQRIPISRMLPT.

Position 1 is an N-acetylmethionine; by host (M1). The disordered stretch occupies residues 1–30 (MDKSGSPNASRTSRRRRPRRGSRSASGADA). The segment covering 12-22 (TSRRRRPRRGS) has biased composition (basic residues).

The protein belongs to the cucumovirus capsid protein family.

The protein resides in the virion. Functionally, capsid protein. Probably binds RNA and plays a role in packaging. The polypeptide is Capsid protein (Cucumber mosaic virus (strain Q) (CMV)).